Here is a 123-residue protein sequence, read N- to C-terminus: Cell division protein SepF (123 aa).

It belongs to the SepF family. In terms of assembly, homodimer. Interacts with FtsZ.

Its subcellular location is the cytoplasm. Its function is as follows. Cell division protein that is part of the divisome complex and is recruited early to the Z-ring. Probably stimulates Z-ring formation, perhaps through the cross-linking of FtsZ protofilaments. Its function overlaps with FtsA. This Tropheryma whipplei (strain TW08/27) (Whipple's bacillus) protein is Cell division protein SepF.